A 230-amino-acid polypeptide reads, in one-letter code: Ribonuclease 3 (230 aa).

The 121-residue stretch at 5 to 125 folds into the RNase III domain; the sequence is YSRFYNILGY…VIGAIYLDSD (121 aa). Position 40 (glutamate 40) interacts with Mg(2+). Aspartate 44 is a catalytic residue. Mg(2+)-binding residues include aspartate 111 and glutamate 114. Glutamate 114 is a catalytic residue. A DRBM domain is found at 153–223; sequence DSKSKLQEIL…AEKMIEMLSQ (71 aa).

It belongs to the ribonuclease III family. As to quaternary structure, homodimer. Mg(2+) serves as cofactor.

Its subcellular location is the cytoplasm. It carries out the reaction Endonucleolytic cleavage to 5'-phosphomonoester.. Digests double-stranded RNA. Involved in the processing of primary rRNA transcript to yield the immediate precursors to the large and small rRNAs (23S and 16S). Processes some mRNAs, and tRNAs when they are encoded in the rRNA operon. Processes pre-crRNA and tracrRNA of type II CRISPR loci if present in the organism. This is Ribonuclease 3 from Francisella tularensis subsp. tularensis (strain FSC 198).